Reading from the N-terminus, the 415-residue chain is DNA polymerase IV (415 aa).

One can recognise a UmuC domain in the interval Ile15 to Gly196. Asp19 and Asp115 together coordinate Mg(2+). Residue Glu116 is part of the active site. Residues Lys238–Met260 form a disordered region. Residues Asp246–Met260 are compositionally biased toward polar residues.

This sequence belongs to the DNA polymerase type-Y family. Monomer. Requires Mg(2+) as cofactor.

The protein resides in the cytoplasm. The catalysed reaction is DNA(n) + a 2'-deoxyribonucleoside 5'-triphosphate = DNA(n+1) + diphosphate. In terms of biological role, poorly processive, error-prone DNA polymerase involved in untargeted mutagenesis. Copies undamaged DNA at stalled replication forks, which arise in vivo from mismatched or misaligned primer ends. These misaligned primers can be extended by PolIV. Exhibits no 3'-5' exonuclease (proofreading) activity. May be involved in translesional synthesis, in conjunction with the beta clamp from PolIII. The sequence is that of DNA polymerase IV from Bacillus cereus (strain ZK / E33L).